The following is a 324-amino-acid chain: Homoserine kinase (324 aa).

87 to 97 (PVARGMGSSAA) is an ATP binding site.

This sequence belongs to the GHMP kinase family. Homoserine kinase subfamily.

Its subcellular location is the cytoplasm. The catalysed reaction is L-homoserine + ATP = O-phospho-L-homoserine + ADP + H(+). The protein operates within amino-acid biosynthesis; L-threonine biosynthesis; L-threonine from L-aspartate: step 4/5. Its function is as follows. Catalyzes the ATP-dependent phosphorylation of L-homoserine to L-homoserine phosphate. In Symbiobacterium thermophilum (strain DSM 24528 / JCM 14929 / IAM 14863 / T), this protein is Homoserine kinase.